Consider the following 354-residue polypeptide: MSDSIIELKNISVHFQNGSESIDAVKNINLAIEKGEIFGIVGYSGAGKSSLVRLINLLHHPSSGDMMIGQTKTVKNGNVLIKGKELRNLRQKIGMIFQHFNLLDQSTVLGNVLFALKHSKMSKEKRLEKAKKLVEEVGLFDRIDNHPSQLSGGQKQRVAIARALANDPEILISDEATSALDPKTTKQILELLADLNKRTGLTIVLITHEMQVVKNIANRVAVMRDGEIIEKNSTYSIFADPQKPLTKEFIESASGNQEALEKILRQPEIARLQKNEFLIQLGFSGSSTDEPLISSLAKNYGVSANILYGNVETIENIPIGTLIVVLSGTATKLKQALDEIKKQNVKLEIIKEGK.

One can recognise an ABC transporter domain in the interval 6–250 (IELKNISVHF…PQKPLTKEFI (245 aa)). 42-49 (GYSGAGKS) contacts ATP.

Belongs to the ABC transporter superfamily. Methionine importer (TC 3.A.1.24) family. In terms of assembly, the complex is composed of two ATP-binding proteins (MetN), two transmembrane proteins (MetI) and a solute-binding protein (MetQ).

It is found in the cell membrane. The catalysed reaction is L-methionine(out) + ATP + H2O = L-methionine(in) + ADP + phosphate + H(+). It catalyses the reaction D-methionine(out) + ATP + H2O = D-methionine(in) + ADP + phosphate + H(+). Functionally, part of the ABC transporter complex MetNIQ involved in methionine import. Responsible for energy coupling to the transport system. This chain is Methionine import ATP-binding protein MetN 2, found in Oenococcus oeni (strain ATCC BAA-331 / PSU-1).